A 312-amino-acid polypeptide reads, in one-letter code: Olfactory receptor 5P4 (312 aa).

The Extracellular segment spans residues 1 to 25 (METENDTMVTEFIILGLTDSATLRA). A glycan (N-linked (GlcNAc...) asparagine) is linked at Asn-5. A helical membrane pass occupies residues 26–46 (ILFVFFLPVYIVTVVGNISII). Residues 47–54 (LLIRSSPQ) lie on the Cytoplasmic side of the membrane. The helical transmembrane segment at 55-75 (LHTPMYLFLSHLAFVDIGYST) threads the bilayer. Over 76–99 (SVTPIMLISFLREETTIPLAGCAA) the chain is Extracellular. Residues Cys-97 and Cys-189 are joined by a disulfide bond. The chain crosses the membrane as a helical span at residues 100-120 (QLGSDVAFGTTECFLLATMAY). At 121–133 (DRYVAICSPLLYS) the chain is on the cytoplasmic side. A helical membrane pass occupies residues 134–154 (TQMSPAICCFLLGASYLGGCM). The Extracellular portion of the chain corresponds to 155–196 (NASSFTGCFVNLNFCGPNKVNHFFCDLFPLVKLSCGHAYIAE). Residues 197–217 (ISPSISSASVLVSTLSTIIVS) form a helical membrane-spanning segment. Residues 218 to 237 (YIYILHSILRMRSAEGRNKA) lie on the Cytoplasmic side of the membrane. The helical transmembrane segment at 238–258 (FSTCTSHLTAVTLFYGTVLFV) threads the bilayer. Topologically, residues 259 to 271 (YVMPKSSYSADQV) are extracellular. The chain crosses the membrane as a helical span at residues 272–292 (KVASVVYTVVIPMLNPLIYSL). The Cytoplasmic segment spans residues 293 to 312 (RNKEVKEAMKKLMARTHWFP).

It belongs to the G-protein coupled receptor 1 family.

Its subcellular location is the cell membrane. Its function is as follows. Potential odorant receptor. The chain is Olfactory receptor 5P4 from Mus musculus (Mouse).